A 1849-amino-acid chain; its full sequence is Brefeldin A-inhibited guanine nucleotide-exchange protein 1 (1849 aa).

The DCB; DCB:DCB and DCB:HUS domain interaction stretch occupies residues 2–224; sequence YEGKKTKNMF…QEAKQMEKER (223 aa). A compositionally biased stretch (basic and acidic residues) spans 46–58; that stretch reads AETEKQSPPHGEA. Disordered stretches follow at residues 46–65, 216–301, and 350–413; these read AETE…SSTL, EAKQ…ADQA, and INVS…SPGA. Phosphoserine occurs at positions 52, 286, 289, and 290. 2 stretches are compositionally biased toward polar residues: residues 350–360 and 394–409; these read INVSADGNNGT and SVSS…SSGP. Phosphoserine is present on residues Ser397 and Ser410. The tract at residues 557-577 is HUS; DCB:HUS domain interaction; the sequence is ADAQSVVDIYVNYDCDLNAAN. The segment at 634–687 is disordered; the sequence is PNSQTTLGQEKPSEQETSEMKHPETINRYGSLNSLESTSSSGIGSYSTQMSGTD. The span at 644–658 shows a compositional bias: basic and acidic residues; that stretch reads KPSEQETSEMKHPET. Residues 664–684 are compositionally biased toward low complexity; it reads SLNSLESTSSSGIGSYSTQMS. Residues 709–840 enclose the SEC7 domain; it reads FTKKPKRGIQ…IIMLTTDLHS (132 aa). The short motif at 711-715 is the Nuclear localization signal (NLS) element; sequence KKPKR. Phosphoserine occurs at positions 1079, 1566, and 1569.

As to quaternary structure, homodimer. Interacts with ARFGEF2/BIG2; both proteins are probably part of the same or very similar macromolecular complexes. Interacts with FKBP2. Interacts with MYO9B. Interacts with PRKAR1A and PRKAR2A. Interacts with PPP1CC. Interacts with NCL, FBL, NUP62 and U3 small nucleolar RNA. Interacts with DPY30. Interacts with PDE3A. Interacts with KANK1. Interacts with TBC1D22A and TBC1D22B. In terms of processing, phosphorylated. In vitro phosphorylated by PKA reducing its GEF activity and dephosphorylated by phosphatase PP1. Abundantly expressed in kidney, somewhat less abundant in lung, spleen, and brain, and still less abundant in heart.

The protein resides in the cytoplasm. Its subcellular location is the perinuclear region. The protein localises to the golgi apparatus. It localises to the trans-Golgi network. It is found in the nucleus. The protein resides in the nucleolus. Its subcellular location is the nucleus matrix. The protein localises to the membrane. Its activity is regulated as follows. Inhibited by brefeldin A. Functionally, promotes guanine-nucleotide exchange on ARF1 and ARF3. Promotes the activation of ARF1/ARF3 through replacement of GDP with GTP. Involved in vesicular trafficking. Required for the maintenance of Golgi structure; the function may be independent of its GEF activity. Required for the maturation of integrin beta-1 in the Golgi. Involved in the establishment and persistence of cell polarity during directed cell movement in wound healing. Proposed to act as A kinase-anchoring protein (AKAP) and may mediate crosstalk between Arf and PKA pathways. Inhibits GAP activity of MYO9B probably through competitive RhoA binding. The function in the nucleus remains to be determined. This is Brefeldin A-inhibited guanine nucleotide-exchange protein 1 (ARFGEF1) from Bos taurus (Bovine).